The chain runs to 198 residues: Acireductone dioxygenase 2 (198 aa).

Residues H99, H101, E105, and H144 each contribute to the Fe(2+) site. Positions 99, 101, 105, and 144 each coordinate Ni(2+).

The protein belongs to the acireductone dioxygenase (ARD) family. Requires Fe(2+) as cofactor. Ni(2+) serves as cofactor. As to expression, ubiquitous.

The protein resides in the cytoplasm. Its subcellular location is the nucleus. It catalyses the reaction 1,2-dihydroxy-5-(methylsulfanyl)pent-1-en-3-one + O2 = 4-methylsulfanyl-2-oxobutanoate + formate + 2 H(+). The enzyme catalyses 1,2-dihydroxy-5-(methylsulfanyl)pent-1-en-3-one + O2 = 3-(methylsulfanyl)propanoate + CO + formate + 2 H(+). Its pathway is amino-acid biosynthesis; L-methionine biosynthesis via salvage pathway; L-methionine from S-methyl-5-thio-alpha-D-ribose 1-phosphate: step 5/6. Functionally, catalyzes 2 different reactions between oxygen and the acireductone 1,2-dihydroxy-3-keto-5-methylthiopentene (DHK-MTPene) depending upon the metal bound in the active site. Fe-containing acireductone dioxygenase (Fe-ARD) produces formate and 2-keto-4-methylthiobutyrate (KMTB), the alpha-ketoacid precursor of methionine in the methionine recycle pathway. Ni-containing acireductone dioxygenase (Ni-ARD) produces methylthiopropionate, carbon monoxide and formate, and does not lie on the methionine recycle pathway. The polypeptide is Acireductone dioxygenase 2 (ARD2) (Oryza sativa subsp. indica (Rice)).